A 434-amino-acid polypeptide reads, in one-letter code: Asparagine--tRNA ligase (434 aa).

This sequence belongs to the class-II aminoacyl-tRNA synthetase family. In terms of assembly, homodimer.

It is found in the cytoplasm. It carries out the reaction tRNA(Asn) + L-asparagine + ATP = L-asparaginyl-tRNA(Asn) + AMP + diphosphate + H(+). This Oenococcus oeni (strain ATCC BAA-331 / PSU-1) protein is Asparagine--tRNA ligase.